Here is a 462-residue protein sequence, read N- to C-terminus: Mitochondrial-processing peptidase subunit beta (462 aa).

A mitochondrion-targeting transit peptide spans 1–20; it reads MFSRTASKFRNTRRLLSTIS. Zn(2+) is bound at residue His-70. Glu-73 (proton acceptor) is an active-site residue. His-74 and Glu-150 together coordinate Zn(2+). Residue Ser-243 is modified to Phosphoserine.

The protein belongs to the peptidase M16 family. As to quaternary structure, heterodimer of MAS2 (alpha) and MAS1 (beta) subunits, forming the mitochondrial processing protease (MPP) in which MAS2 is involved in substrate recognition and binding and MAS1 is the catalytic subunit. Zn(2+) serves as cofactor.

Its subcellular location is the mitochondrion matrix. The enzyme catalyses Release of N-terminal transit peptides from precursor proteins imported into the mitochondrion, typically with Arg in position P2.. Its activity is regulated as follows. Binding to MAS2 is required for catalytic activity. Inhibited by high levels (&gt; 1uM) of zinc. Inhibited by metal chelators ethylenediaminetetraacetic acid (EDTA) and O-phenanthroline. Its function is as follows. Catalytic subunit of the essential mitochondrial processing protease (MPP), which cleaves the mitochondrial sequence off newly imported precursors proteins. Preferentially, cleaves after an arginine at position P2. This Saccharomyces cerevisiae (strain ATCC 204508 / S288c) (Baker's yeast) protein is Mitochondrial-processing peptidase subunit beta.